A 246-amino-acid polypeptide reads, in one-letter code: Small ribosomal subunit protein uS2 (246 aa).

Belongs to the universal ribosomal protein uS2 family.

This Burkholderia thailandensis (strain ATCC 700388 / DSM 13276 / CCUG 48851 / CIP 106301 / E264) protein is Small ribosomal subunit protein uS2.